The primary structure comprises 151 residues: UPF0208 membrane protein YfbV (151 aa).

Helical transmembrane passes span 46–65 (YAIRFMPPIAVFTLCWQIAL) and 69–91 (LGPAVATALFALSLPMQGLWWLG).

Belongs to the UPF0208 family.

It is found in the cell inner membrane. The sequence is that of UPF0208 membrane protein YfbV from Escherichia coli O1:K1 / APEC.